The primary structure comprises 179 residues: Bifunctional protein PyrR (179 aa).

The PRPP-binding motif lies at 97-109; the sequence is VILIDDVLFTGRT.

Belongs to the purine/pyrimidine phosphoribosyltransferase family. PyrR subfamily.

The catalysed reaction is UMP + diphosphate = 5-phospho-alpha-D-ribose 1-diphosphate + uracil. Functionally, regulates the transcription of the pyrimidine nucleotide (pyr) operon in response to exogenous pyrimidines. Also displays a weak uracil phosphoribosyltransferase activity which is not physiologically significant. The chain is Bifunctional protein PyrR from Actinobacillus pleuropneumoniae serotype 5b (strain L20).